The primary structure comprises 358 residues: tRNA-specific 2-thiouridylase MnmA (358 aa).

Residues 6–13 and leucine 32 each bind ATP; that span reads AMSGGVDS. Residue cysteine 101 is the Nucleophile of the active site. Cysteine 101 and cysteine 193 are disulfide-bonded. Glycine 125 serves as a coordination point for ATP. The tract at residues 143 to 145 is interaction with tRNA; that stretch reads KDQ. Cysteine 193 acts as the Cysteine persulfide intermediate in catalysis.

This sequence belongs to the MnmA/TRMU family.

It localises to the cytoplasm. The catalysed reaction is S-sulfanyl-L-cysteinyl-[protein] + uridine(34) in tRNA + AH2 + ATP = 2-thiouridine(34) in tRNA + L-cysteinyl-[protein] + A + AMP + diphosphate + H(+). In terms of biological role, catalyzes the 2-thiolation of uridine at the wobble position (U34) of tRNA, leading to the formation of s(2)U34. The chain is tRNA-specific 2-thiouridylase MnmA from Mycolicibacterium paratuberculosis (strain ATCC BAA-968 / K-10) (Mycobacterium paratuberculosis).